The following is a 218-amino-acid chain: MNWSDILAEEKQKPYFKKILEFLANEALVGKTIFPTKANIFNAFKYTRLDNLKVVILGQDPYHNYNQAHGLAFSVQQGVDIPPSLRNIYKELERSITEFKIPEHGCLINWAKQGVFLLNTTLTVEAHKANSHKDIGWEIFTDAVIQKISNNKPNVVFMLWGSHARKKKNLIDTAKHLVLESSHPSPLSVYRGFDGCDHFVKANQYLTSKDLDIIDWRL.

The active-site Proton acceptor is the Asp-60.

Belongs to the uracil-DNA glycosylase (UDG) superfamily. UNG family.

Its subcellular location is the cytoplasm. It catalyses the reaction Hydrolyzes single-stranded DNA or mismatched double-stranded DNA and polynucleotides, releasing free uracil.. Functionally, excises uracil residues from the DNA which can arise as a result of misincorporation of dUMP residues by DNA polymerase or due to deamination of cytosine. The polypeptide is Uracil-DNA glycosylase (Francisella philomiragia subsp. philomiragia (strain ATCC 25017 / CCUG 19701 / FSC 153 / O#319-036)).